Reading from the N-terminus, the 307-residue chain is MPLVAVAGPTGSGKSELALLIAEKFHGEIVNCDSLQVYRHFDIGTAKLPLGERRGIPHHLIDIIDPNELFTAGEYARIARNTIADISARGRLPILAGGTGFYLRALLDGLFEGPARDQPLRDRLTAREARRAGSLHRILRRLDSVSAAKIHANDVPKVTRALEVCLLTQRPVSELFARGRDSLRGYRTLKLGLLPDREVLYPRLDARCAWMFENGLVDEVRAILALGFAAECKPFESHGYKQALQHIRGELNLREAIFYAQRNTRNYAKRQITWFRREPELVWLKDFGNAPEIRETAMDRVAKFLGQ.

8–15 (GPTGSGKS) is a binding site for ATP. 10–15 (TGSGKS) is a binding site for substrate. The tract at residues 33–36 (DSLQ) is interaction with substrate tRNA.

The protein belongs to the IPP transferase family. In terms of assembly, monomer. The cofactor is Mg(2+).

It carries out the reaction adenosine(37) in tRNA + dimethylallyl diphosphate = N(6)-dimethylallyladenosine(37) in tRNA + diphosphate. In terms of biological role, catalyzes the transfer of a dimethylallyl group onto the adenine at position 37 in tRNAs that read codons beginning with uridine, leading to the formation of N6-(dimethylallyl)adenosine (i(6)A). This is tRNA dimethylallyltransferase from Solibacter usitatus (strain Ellin6076).